Reading from the N-terminus, the 76-residue chain is UPF0346 protein LBUL_1194 (76 aa).

It belongs to the UPF0346 family.

This chain is UPF0346 protein LBUL_1194, found in Lactobacillus delbrueckii subsp. bulgaricus (strain ATCC BAA-365 / Lb-18).